We begin with the raw amino-acid sequence, 203 residues long: MGKKINPILFRLKKNTVYHSLWYTFKKNFCYYLKCDILIREIIRRNFLFINLSYIDIIISNKLTINLYINNVDQFNIIENYLDVFVFQISKILKKNVILNFVFNHVLNAKNIAYNVVNQILNKNSIKKIIKEELLKNRKNFGCKIQISGRLEGVDIARKEWSLIGRIPLHTIKYNLEYYQCETLTQYGILGIKIWLFKKNNEK.

One can recognise a KH type-2 domain in the interval 39 to 113; the sequence is IREIIRRNFL…NHVLNAKNIA (75 aa).

It belongs to the universal ribosomal protein uS3 family. As to quaternary structure, part of the 30S ribosomal subunit. Forms a tight complex with proteins S10 and S14.

In terms of biological role, binds the lower part of the 30S subunit head. Binds mRNA in the 70S ribosome, positioning it for translation. The chain is Small ribosomal subunit protein uS3 from Carsonella ruddii.